Consider the following 313-residue polypeptide: Protein FixB (313 aa).

255-283 is an FAD binding site; the sequence is LYLAVGISGQIQHMVGANASQTIFAINKD.

This sequence belongs to the ETF alpha-subunit/FixB family. As to quaternary structure, heterodimer of FixA and FixB.

The protein operates within amine and polyamine metabolism; carnitine metabolism. Required for anaerobic carnitine reduction. May bring reductant to CaiA. This Shigella dysenteriae serotype 1 (strain Sd197) protein is Protein FixB.